We begin with the raw amino-acid sequence, 199 residues long: Recombination protein RecR (199 aa).

A C4-type zinc finger spans residues 57–72; the sequence is CSICGNFTDRDPCRLC. A Toprim domain is found at 80-175; it reads SCICVVEEAR…KVTRLAYGLP (96 aa).

It belongs to the RecR family.

In terms of biological role, may play a role in DNA repair. It seems to be involved in an RecBC-independent recombinational process of DNA repair. It may act with RecF and RecO. The sequence is that of Recombination protein RecR from Moorella thermoacetica (strain ATCC 39073 / JCM 9320).